We begin with the raw amino-acid sequence, 318 residues long: UDP-N-acetylenolpyruvoylglucosamine reductase (318 aa).

An FAD-binding PCMH-type domain is found at 38 to 204; it reads IGGVCPVIVE…LGIEILLKEG (167 aa). Residue arginine 182 is part of the active site. The segment covering 212–229 has biased composition (basic and acidic residues); it reads SLKDKRDRRNSSQPENKK. A disordered region spans residues 212–232; sequence SLKDKRDRRNSSQPENKKSAG. Serine 233 serves as the catalytic Proton donor. The active site involves glutamate 310.

This sequence belongs to the MurB family. Requires FAD as cofactor.

The protein localises to the cytoplasm. The enzyme catalyses UDP-N-acetyl-alpha-D-muramate + NADP(+) = UDP-N-acetyl-3-O-(1-carboxyvinyl)-alpha-D-glucosamine + NADPH + H(+). It participates in cell wall biogenesis; peptidoglycan biosynthesis. In terms of biological role, cell wall formation. This chain is UDP-N-acetylenolpyruvoylglucosamine reductase, found in Leptospira interrogans serogroup Icterohaemorrhagiae serovar Lai (strain 56601).